Reading from the N-terminus, the 173-residue chain is U1 small nuclear ribonucleoprotein C (173 aa).

The segment at 4-36 adopts a Matrin-type zinc-finger fold; that stretch reads YYCDYCDTYLTHDSPSVRKTHCQGRKHKDNVKF. The tract at residues 72 to 100 is disordered; that stretch reads AAIPPPANMQGPPRPVPPGPMGPGPNMLG. A compositionally biased stretch (pro residues) spans 73–94; the sequence is AIPPPANMQGPPRPVPPGPMGP.

The protein belongs to the U1 small nuclear ribonucleoprotein C family. U1 snRNP is composed of the 7 core Sm proteins B/B', D1, D2, D3, E, F and G that assemble in a heptameric protein ring on the Sm site of the small nuclear RNA to form the core snRNP, and at least 3 U1 snRNP-specific proteins U1-70K, U1-A and U1-C. U1-C interacts with U1 snRNA and the 5' splice-site region of the pre-mRNA.

It is found in the nucleus. In terms of biological role, component of the spliceosomal U1 snRNP, which is essential for recognition of the pre-mRNA 5' splice-site and the subsequent assembly of the spliceosome. U1-C is directly involved in initial 5' splice-site recognition for both constitutive and regulated alternative splicing. The interaction with the 5' splice-site seems to precede base-pairing between the pre-mRNA and the U1 snRNA. Stimulates commitment or early (E) complex formation by stabilizing the base pairing of the 5' end of the U1 snRNA and the 5' splice-site region. This chain is U1 small nuclear ribonucleoprotein C, found in Pediculus humanus subsp. corporis (Body louse).